Reading from the N-terminus, the 149-residue chain is UPF0336 protein Lxx02810 (149 aa).

The protein belongs to the UPF0336 family.

The protein is UPF0336 protein Lxx02810 of Leifsonia xyli subsp. xyli (strain CTCB07).